A 266-amino-acid polypeptide reads, in one-letter code: Diphthine synthase (266 aa).

S-adenosyl-L-methionine contacts are provided by residues Leu9, Asp84, Val87, 112–113 (SI), Leu169, Ala210, and His235.

It belongs to the diphthine synthase family. As to quaternary structure, homodimer.

The catalysed reaction is 2-[(3S)-amino-3-carboxypropyl]-L-histidyl-[translation elongation factor 2] + 3 S-adenosyl-L-methionine = diphthine-[translation elongation factor 2] + 3 S-adenosyl-L-homocysteine + 3 H(+). Its pathway is protein modification; peptidyl-diphthamide biosynthesis. Functionally, S-adenosyl-L-methionine-dependent methyltransferase that catalyzes the trimethylation of the amino group of the modified target histidine residue in translation elongation factor 2 (EF-2), to form an intermediate called diphthine. The three successive methylation reactions represent the second step of diphthamide biosynthesis. The polypeptide is Diphthine synthase (Methanosarcina barkeri (strain Fusaro / DSM 804)).